We begin with the raw amino-acid sequence, 309 residues long: uncharacterized protein (309 aa).

One can recognise a Radical SAM core domain in the interval 17–254 (RYGQKVHKLT…AGEMIRHTPP (238 aa)). [4Fe-4S] cluster-binding residues include cysteine 33, cysteine 45, and cysteine 48.

The protein belongs to the radical SAM superfamily. It depends on [4Fe-4S] cluster as a cofactor.

This is an uncharacterized protein from Escherichia coli O157:H7.